A 417-amino-acid chain; its full sequence is D-amino acid dehydrogenase (417 aa).

3 to 17 (VIVIGSGVIGLTSAW) contributes to the FAD binding site.

Belongs to the DadA oxidoreductase family. FAD serves as cofactor.

It carries out the reaction a D-alpha-amino acid + A + H2O = a 2-oxocarboxylate + AH2 + NH4(+). Its pathway is amino-acid degradation; D-alanine degradation; NH(3) and pyruvate from D-alanine: step 1/1. Its function is as follows. Oxidative deamination of D-amino acids. This Vibrio atlanticus (strain LGP32) (Vibrio splendidus (strain Mel32)) protein is D-amino acid dehydrogenase.